Reading from the N-terminus, the 1048-residue chain is Transcription factor mef2A (1048 aa).

The 61-residue stretch at M1 to D61 folds into the MADS-box domain. The span at D74 to Y85 shows a compositional bias: polar residues. 4 disordered regions span residues D74–Q263, Q294–Q339, G386–T812, and L916–N1048. Positions D97–G110 are enriched in acidic residues. 7 stretches are compositionally biased toward low complexity: residues N130 to H205, G212 to Q263, Q294 to N303, Q327 to Q339, P393 to K437, Y446 to G466, and Q481 to P500. The stretch at N249–M304 forms a coiled coil. Polar residues predominate over residues Y506 to H522. Over residues H529–Q539 the composition is skewed to basic residues. A compositionally biased stretch (low complexity) spans Q540–Q593. The span at N600–M618 shows a compositional bias: polar residues. Residues N619–N699 are compositionally biased toward low complexity. Over residues S715–V736 the composition is skewed to polar residues. 3 stretches are compositionally biased toward low complexity: residues N738 to T802, S924 to S960, and N982 to N1029.

It localises to the nucleus. In terms of biological role, transcription factor that regulates cell differentiation during development. Seems to negatively regulate prestalk gene expression and positively regulate prespore gene expression. The protein is Transcription factor mef2A (mef2A) of Dictyostelium discoideum (Social amoeba).